We begin with the raw amino-acid sequence, 299 residues long: Trimeric intracellular cation channel type A (299 aa).

The Lumenal portion of the chain corresponds to 1–18 (MELLSALSLGELALSFSR). A helical transmembrane segment spans residues 19 to 39 (VPLFPVFDLSYFIVSILYLKY). Topologically, residues 40–51 (EPGAVELSRRHP) are cytoplasmic. A helical membrane pass occupies residues 52–72 (IASWLCAMLHCFGSYILADLL). Over 73 to 85 (LGEPLIDYFSNNS) the chain is Lumenal. Residue Gly-74 participates in Ca(2+) binding. The helical transmembrane segment at 86 to 106 (SILLASAVWYLIFFCPLDLFY) threads the bilayer. At 107-144 (KCVCFLPVKLIFVAMKEVVRVRKIAVGIHHAHHHYHHG) the chain is on the cytoplasmic side. Residues Lys-122 and Arg-126 each contribute to the a 1,2-diacyl-sn-glycero-3-phospho-(1D-myo-inositol-4,5-bisphosphate) site. A helical membrane pass occupies residues 145-165 (WFVMIATGWVKGSGVALMSNF). The Lumenal portion of the chain corresponds to 166 to 178 (EQLLRGVWKPETN). The helical transmembrane segment at 179–199 (EILHMSFPTKASLYGAILFTL) threads the bilayer. Residues 200–209 (QQTRWLPVSK) are Cytoplasmic-facing. A helical membrane pass occupies residues 210-230 (ASLIFIFTLFMVSCKVFLTAT). The Lumenal portion of the chain corresponds to 231–234 (HSHS). A helical membrane pass occupies residues 235–255 (SPFDALEGYICPVLFGSACGG). The Cytoplasmic portion of the chain corresponds to 256–299 (DHHHDNHGGSHSGGGPGAQHSAMPAKSKEELSEGSRKKKAKKAD). Residues 260 to 299 (DNHGGSHSGGGPGAQHSAMPAKSKEELSEGSRKKKAKKAD) are disordered. Basic and acidic residues predominate over residues 281–290 (KSKEELSEGS).

It belongs to the TMEM38 family. As to quaternary structure, homotrimer; conformation seems to be controled by binding to diacylglycerol (DAG).

It is found in the sarcoplasmic reticulum membrane. It localises to the nucleus membrane. The catalysed reaction is K(+)(in) = K(+)(out). Channel activity is activated by a change of voltage within the sarcoplasmic reticulum lumen and blocked by luminal high Ca(2+) levels. Its function is as follows. Intracellular monovalent cation channel required for maintenance of rapid intracellular calcium release. Acts as a potassium counter-ion channel that functions in synchronization with calcium release from intracellular stores. Opened by a change of voltage within the sarcoplasmic reticulum lumen. This is Trimeric intracellular cation channel type A from Homo sapiens (Human).